A 307-amino-acid chain; its full sequence is Regulating synaptic membrane exocytosis protein 3 (307 aa).

The tract at residues 86-120 (STETGIAVEMRSRVTRQGSRESTDGSTNSNSSEGT) is disordered. Residues 109–119 (DGSTNSNSSEG) show a composition bias toward polar residues. Positions 155-273 (PMGDVHIAIM…DLSAAVTGWY (119 aa)) constitute a C2 domain. 2 positions are modified to phosphoserine: Ser-294 and Ser-297.

In terms of assembly, binds PPFIA3. Does not bind RAB3.

The protein localises to the synapse. In terms of biological role, regulates synaptic membrane exocytosis. This chain is Regulating synaptic membrane exocytosis protein 3 (Rims3), found in Mus musculus (Mouse).